Here is a 455-residue protein sequence, read N- to C-terminus: Beta-cyclopiazonate dehydrogenase (455 aa).

The first 20 residues, 1 to 20 (MATRIASFIGISTVASLALA), serve as a signal peptide directing secretion.

Belongs to the beta-cyclopiazonate dehydrogenase family. The cofactor is FAD.

It carries out the reaction beta-cyclopiazonate + A = alpha-cyclopiazonate + AH2. Its function is as follows. Beta-cyclopiazonate dehydrogenase involved in the synthesis of the fungal neurotoxin alpha-cyclopiazonic acid (CPA). CpaO carries out the dehydrogenation of beta-CPA to yield an unstable enimine product, which is captured by intramolecular cyclization to create the pentacyclic fused scaffold of alpha-cyclopiazonate. This is Beta-cyclopiazonate dehydrogenase from Aspergillus flavus (strain ATCC 200026 / FGSC A1120 / IAM 13836 / NRRL 3357 / JCM 12722 / SRRC 167).